Here is a 61-residue protein sequence, read N- to C-terminus: MKRFLFLLLTISLLVMVQIQTGLSGQNDTSQTSSPSASSNISGGIFLFFVANAIIHLFCFS.

The signal sequence occupies residues 1-24 (MKRFLFLLLTISLLVMVQIQTGLS). Asparagine 27 carries N-linked (GlcNAc...) asparagine glycosylation. A lipid anchor (GPI-anchor amidated serine) is attached at serine 36. The propeptide at 37–61 (ASSNISGGIFLFFVANAIIHLFCFS) is removed in mature form. Asparagine 40 carries an N-linked (GlcNAc...) asparagine glycan.

It localises to the cell membrane. Functionally, may play a role in carrying and orienting carbohydrate, as well as having a more specific role. This is CAMPATH-1 antigen (CD52) from Homo sapiens (Human).